A 141-amino-acid polypeptide reads, in one-letter code: Endoribonuclease YbeY (141 aa).

3 residues coordinate Zn(2+): His107, His111, and Asp117.

It belongs to the endoribonuclease YbeY family. Zn(2+) serves as cofactor.

It is found in the cytoplasm. Its function is as follows. Single strand-specific metallo-endoribonuclease involved in late-stage 70S ribosome quality control and in maturation of the 3' terminus of the 16S rRNA. This Endomicrobium trichonymphae protein is Endoribonuclease YbeY.